Here is a 132-residue protein sequence, read N- to C-terminus: Small ribosomal subunit protein uS8 (132 aa).

The protein belongs to the universal ribosomal protein uS8 family. In terms of assembly, part of the 30S ribosomal subunit. Contacts proteins S5 and S12.

In terms of biological role, one of the primary rRNA binding proteins, it binds directly to 16S rRNA central domain where it helps coordinate assembly of the platform of the 30S subunit. This Psychrobacter cryohalolentis (strain ATCC BAA-1226 / DSM 17306 / VKM B-2378 / K5) protein is Small ribosomal subunit protein uS8.